A 71-amino-acid polypeptide reads, in one-letter code: Small ribosomal subunit protein bS18 (71 aa).

The protein belongs to the bacterial ribosomal protein bS18 family. In terms of assembly, part of the 30S ribosomal subunit. Forms a tight heterodimer with protein bS6.

Binds as a heterodimer with protein bS6 to the central domain of the 16S rRNA, where it helps stabilize the platform of the 30S subunit. The protein is Small ribosomal subunit protein bS18 of Acaryochloris marina (strain MBIC 11017).